The following is a 118-amino-acid chain: MRIKNGVWARKRHKKWLKLAKGYWGAKSRVFKQAHIAVMRSLRYAYIGRRLKKRDFRRLWITRINAAARQNGLSYSKFINGLKKAGISLNRKVLADMAINDQKAFAELVEIAKKQING.

This sequence belongs to the bacterial ribosomal protein bL20 family.

Binds directly to 23S ribosomal RNA and is necessary for the in vitro assembly process of the 50S ribosomal subunit. It is not involved in the protein synthesizing functions of that subunit. In Caldicellulosiruptor saccharolyticus (strain ATCC 43494 / DSM 8903 / Tp8T 6331), this protein is Large ribosomal subunit protein bL20.